The sequence spans 295 residues: Light-independent protochlorophyllide reductase iron-sulfur ATP-binding protein (295 aa).

ATP-binding positions include 39–44 and K68; that span reads GIGKST. Residue S43 participates in Mg(2+) binding. [4Fe-4S] cluster-binding residues include C124 and C158. 209–210 is a binding site for ATP; it reads NR.

This sequence belongs to the NifH/BchL/ChlL family. Homodimer. Protochlorophyllide reductase is composed of three subunits; ChlL, ChlN and ChlB. [4Fe-4S] cluster is required as a cofactor.

It carries out the reaction chlorophyllide a + oxidized 2[4Fe-4S]-[ferredoxin] + 2 ADP + 2 phosphate = protochlorophyllide a + reduced 2[4Fe-4S]-[ferredoxin] + 2 ATP + 2 H2O. It participates in porphyrin-containing compound metabolism; chlorophyll biosynthesis (light-independent). Component of the dark-operative protochlorophyllide reductase (DPOR) that uses Mg-ATP and reduced ferredoxin to reduce ring D of protochlorophyllide (Pchlide) to form chlorophyllide a (Chlide). This reaction is light-independent. The L component serves as a unique electron donor to the NB-component of the complex, and binds Mg-ATP. The polypeptide is Light-independent protochlorophyllide reductase iron-sulfur ATP-binding protein (Prochlorococcus marinus (strain MIT 9215)).